The primary structure comprises 296 residues: Cobalamin trafficking protein CblD (296 aa).

The transit peptide at 1-38 directs the protein to the mitochondrion; sequence MANVLCNRARLVSYLPGFCSLVKRVVNPKAFSTAGSSG. At Lys203 the chain carries N6-acetyllysine.

Heterodimer with MMACHC. Forms a multiprotein complex with MMACHC, MTR and MTRR. Widely expressed at high levels.

The protein localises to the cytoplasm. Its subcellular location is the mitochondrion. Functionally, involved in cobalamin metabolism and trafficking. Plays a role in regulating the biosynthesis and the proportion of two coenzymes, methylcob(III)alamin (MeCbl) and 5'-deoxyadenosylcobalamin (AdoCbl). Promotes oxidation of cob(II)alamin bound to MMACHC. The processing of cobalamin in the cytosol occurs in a multiprotein complex composed of at least MMACHC, MMADHC, MTRR (methionine synthase reductase) and MTR (methionine synthase) which may contribute to shuttle safely and efficiently cobalamin towards MTR in order to produce methionine. The protein is Cobalamin trafficking protein CblD of Homo sapiens (Human).